A 92-amino-acid chain; its full sequence is PqqA binding protein (92 aa).

This sequence belongs to the PqqD family. Monomer. Interacts with PqqE.

The protein operates within cofactor biosynthesis; pyrroloquinoline quinone biosynthesis. Functions as a PqqA binding protein and presents PqqA to PqqE, in the pyrroloquinoline quinone (PQQ) biosynthetic pathway. In Xanthomonas campestris pv. campestris (strain B100), this protein is PqqA binding protein.